A 165-amino-acid chain; its full sequence is Lipoprotein signal peptidase (165 aa).

A run of 2 helical transmembrane segments spans residues 66-86 (WQFW…LSLT) and 91-111 (NEPV…GNLV). Catalysis depends on residues Asp-121 and Asp-139. Residues 132–152 (WPAFNVADIAICIGAFLAFVA) traverse the membrane as a helical segment.

Belongs to the peptidase A8 family.

The protein localises to the cell inner membrane. The catalysed reaction is Release of signal peptides from bacterial membrane prolipoproteins. Hydrolyzes -Xaa-Yaa-Zaa-|-(S,diacylglyceryl)Cys-, in which Xaa is hydrophobic (preferably Leu), and Yaa (Ala or Ser) and Zaa (Gly or Ala) have small, neutral side chains.. Its pathway is protein modification; lipoprotein biosynthesis (signal peptide cleavage). Functionally, this protein specifically catalyzes the removal of signal peptides from prolipoproteins. This chain is Lipoprotein signal peptidase, found in Nitratidesulfovibrio vulgaris (strain DP4) (Desulfovibrio vulgaris).